The following is a 471-amino-acid chain: Trigger factor (471 aa).

Positions 166–245 (DDFITIDINA…LTAVKVRELP (80 aa)) constitute a PPIase FKBP-type domain. A disordered region spans residues 442–471 (AAGVTGEDDDTEAEEERVTVSADDPGAARF). Residues 447 to 456 (GEDDDTEAEE) are compositionally biased toward acidic residues.

It belongs to the FKBP-type PPIase family. Tig subfamily.

Its subcellular location is the cytoplasm. It catalyses the reaction [protein]-peptidylproline (omega=180) = [protein]-peptidylproline (omega=0). Functionally, involved in protein export. Acts as a chaperone by maintaining the newly synthesized protein in an open conformation. Functions as a peptidyl-prolyl cis-trans isomerase. The protein is Trigger factor of Renibacterium salmoninarum (strain ATCC 33209 / DSM 20767 / JCM 11484 / NBRC 15589 / NCIMB 2235).